Consider the following 132-residue polypeptide: Pro-MCH 1 (132 aa).

Residues 1-24 (MRHSVLSISFAVALFLECYTPSTA) form the signal peptide. A disulfide bridge connects residues cysteine 120 and cysteine 129.

It belongs to the melanin-concentrating hormone family. Pituitary gland. Produced in neurons of lateral basal hypothalamus which project both to the brain and to the neural lobe of the pituitary gland from where MCH is released.

Plays a role in skin pigmentation by antagonizing the action of melanotropin alpha. Induces melanin concentration within the melanophores. May participate in the control of the hypothalamo-pituitary adrenal gland axis by inhibiting the release of ACTH. This is Pro-MCH 1 (mch1) from Oncorhynchus mykiss (Rainbow trout).